Reading from the N-terminus, the 323-residue chain is MTKTFRNPQLTKNGELKHLLSIEGLSRDMITHILDTASQFVSLSDSDRDVKKVPLLRGKSVFNLFFENSTRTRTTFEIAAKRLSADVLNLNINASSTSKGESLLDTINNLSAMSADMFVVRHASSGAPYLIAEHVAPHVHVINAGDGRHAHPTQGLLDMYTIRHFKKDFTNLTVAIVGDILHSRVARSDIHALTTLGVPEVRAIGPRTLLPSGLEQMGVRVFHSMEEGLKGVDVVIMLRLQNERMSGALLPSAQEYFKAYGLTPERLALAKPDAIVMHPGPMNRGVEIDSAVADGAQSVILNQVTFGIAVRMAVMGIVAGNND.

Residues R71 and T72 each contribute to the carbamoyl phosphate site. Residue K99 coordinates L-aspartate. R121, H151, and Q154 together coordinate carbamoyl phosphate. L-aspartate is bound by residues R184 and R239. Positions 280 and 281 each coordinate carbamoyl phosphate.

The protein belongs to the aspartate/ornithine carbamoyltransferase superfamily. ATCase family. As to quaternary structure, heterododecamer (2C3:3R2) of six catalytic PyrB chains organized as two trimers (C3), and six regulatory PyrI chains organized as three dimers (R2).

It carries out the reaction carbamoyl phosphate + L-aspartate = N-carbamoyl-L-aspartate + phosphate + H(+). The protein operates within pyrimidine metabolism; UMP biosynthesis via de novo pathway; (S)-dihydroorotate from bicarbonate: step 2/3. Catalyzes the condensation of carbamoyl phosphate and aspartate to form carbamoyl aspartate and inorganic phosphate, the committed step in the de novo pyrimidine nucleotide biosynthesis pathway. This Cupriavidus taiwanensis (strain DSM 17343 / BCRC 17206 / CCUG 44338 / CIP 107171 / LMG 19424 / R1) (Ralstonia taiwanensis (strain LMG 19424)) protein is Aspartate carbamoyltransferase catalytic subunit.